The following is a 253-amino-acid chain: Discoidin-1 subunit B/C (253 aa).

At Ser2 the chain carries N-acetylserine. One can recognise an F5/8 type C domain in the interval 2-152 (STQGLVQLIS…ISLRCEFYTQ (151 aa)). Positions 79–81 (RGD) match the Cell attachment site motif.

In terms of assembly, tetramer of four different chains (A to D). Stalk cells.

The protein localises to the cytoplasm. In terms of biological role, galactose- and N-acetylgalactosamine-binding lectin. May play a role in cell-substratum adhesion rather than in cell-cell adhesion. May be necessary for the maintenance of normal elongate morphology during aggregation. The polypeptide is Discoidin-1 subunit B/C (dscC-1) (Dictyostelium discoideum (Social amoeba)).